A 369-amino-acid chain; its full sequence is NAD-dependent epimerase/dehydratase FUM13 (369 aa).

Tyr176 contacts NADP(+).

It belongs to the NAD(P)-dependent epimerase/dehydratase family. Dihydroflavonol-4-reductase subfamily.

The protein operates within mycotoxin biosynthesis. NAD-dependent epimerase/dehydratase; part of the gene cluster that mediates the biosynthesis of fumonisins B1 (FB1), B2 (FB2), B3 (FB3), and B4 (FB4), which are carcinogenic mycotoxins. Within the pathway, FUM13 stereospecifically reduces the intermediate 3-keto intermediate 2-amino-3-oxo-12,16-dimethylicosane to the 3-hydroxyl product 2-amino-3-hydroxy-12,16-dimethylicosane. The biosynthesis starts with the FUM1-catalyzed carbon chain assembly from one molecule of acetyl-CoA, eight molecules of malonyl-CoA, and two molecules of methionine (in S-adenosyl form). The C18 polyketide chain is released from the enzyme by a nucleophilic attack of a carbanion, which is derived from R-carbon of alanine by decarboxylation, on the carbonyl carbon of polyketide acyl chain. This step is catalyzed by the pyridoxal 5'-phosphate-dependent aminoacyl transferase FUM8. The resultant 3-keto intermediate is then stereospecifically reduced to a 3-hydroxyl product by reductase FUM13. Subsequent oxidations at C-10 by the cytochrome P450 monooxygenase FUM2, C-14 and C-15 by FUM6, FUM12 or FUM15, tricarballylic esterification of the hydroxyl groups on C-14 and C-15 by acyltransferase FUM14, and C-5 hydroxylation by 2-keto-glutarate-dependent dioxygenase FUM3 furnish the biosynthesis of fumonisins. The tricarballylic moieties are most likely derived from the citric acid cycle, and their addition to the carbon backbone may involve FUM7, FUM10, FUM11 and FUM14. The chain is NAD-dependent epimerase/dehydratase FUM13 from Gibberella moniliformis (strain M3125 / FGSC 7600) (Maize ear and stalk rot fungus).